A 491-amino-acid chain; its full sequence is MARAIMLQGTGSDVGKTVLVAGLCRAAKKRGLKVRPFKPQNMSNNAAVADIPGDNNHGGGEIGRAQWLQAIACGVAPSVHMNPVLLKPQSDVGAQVIVQGKVFGEARARDYQALKGRLMDAVLDSWAKVGEGADLVIVEGAGSPAEINLRSRDIANMGFATRADVPVVLVGDIDRGGVIASVAGTHLILPEEDRRMIVGYLINKFRGDVSLFDDGLKAIEKFTGWRCFGVVPWLKAAARLPSEDSVVLERLASGEARALKVAVPVLGRIANFDDLDPLKAEPQVEVVFVPPGKPLPSDAGLVVIPGSKSTIGDLIRFRENGWDRDLATHRKRGGHVVGICGGFQMLGRRVRDPDGIEGSVTEAEGLGLLDIETMMEPEKTVRNVSARSVQFDLPLEGYEIHLGRTTGPDTMRPSAIINGVADGAISADGKVIGTYMHGLFGADAFRGKFLESLGIKGGGIDYRVEVERALDDVAAELEGHLDCDALFGLAR.

The GATase cobBQ-type domain maps to 258–445 (ALKVAVPVLG…MHGLFGADAF (188 aa)). Residue cysteine 340 is the Nucleophile of the active site. Histidine 437 is an active-site residue.

The protein belongs to the CobB/CobQ family. CobQ subfamily.

It participates in cofactor biosynthesis; adenosylcobalamin biosynthesis. Its function is as follows. Catalyzes amidations at positions B, D, E, and G on adenosylcobyrinic A,C-diamide. NH(2) groups are provided by glutamine, and one molecule of ATP is hydrogenolyzed for each amidation. This chain is Cobyric acid synthase, found in Mesorhizobium japonicum (strain LMG 29417 / CECT 9101 / MAFF 303099) (Mesorhizobium loti (strain MAFF 303099)).